Consider the following 266-residue polypeptide: GTP-binding protein Rhes (266 aa).

A GTP-binding site is contributed by 26 to 33; sequence GASRVGKS. An Effector region motif is present at residues 48 to 56; that stretch reads YTPTIEDFH. Residues 73-77 and 140-143 contribute to the GTP site; these read DTSGN and NKND. The tract at residues 189–235 is interaction with GNB1, GNB2 and GNB3; the sequence is MAKLPHEMSPALHRKISVQYGDAFHPRPFCMRRVKEMDAYGMVSPFA. Position 263 is a cysteine methyl ester (C263). C263 carries the S-farnesyl cysteine lipid modification. Residues 264–266 constitute a propeptide, removed in mature form; it reads TIQ.

The protein belongs to the small GTPase superfamily. RasD family. As to quaternary structure, monomer (Potential). Interacts with PIK3CA and UBE2I. Interacts with GNB1, GNB2 and GNB3. Interacts with HTT; interacts with mutant HTT (mHTT) with a much higher affinity than wild type HTT. In terms of processing, farnesylated. Farnesylation is required for membrane targeting. Pancreatic endocrine cells (islets of Langerhans).

The protein resides in the cell membrane. GTPase signaling protein that binds to and hydrolyzes GTP. Regulates signaling pathways involving G-proteins-coupled receptor and heterotrimeric proteins such as GNB1, GNB2 and GNB3. May be involved in selected striatal competencies, mainly locomotor activity and motor coordination. This chain is GTP-binding protein Rhes (RASD2), found in Homo sapiens (Human).